Here is a 571-residue protein sequence, read N- to C-terminus: Vesicle-associated protein 1-4 (571 aa).

Residues 1 to 126 form the MSP 1 domain; sequence MSTDELLTFD…EETIFKIIYV (126 aa). The tract at residues 132-154 is disordered; sequence QSPVQEGLEDGSSPSASVSDKGN. A compositionally biased stretch (polar residues) spans 143–153; the sequence is SSPSASVSDKG. The 121-residue stretch at 176-296 folds into the MSP 2 domain; that stretch reads LLIIDPVDVQ…EETRLKVMYV (121 aa). The segment at 297–322 is disordered; the sequence is TPPQPPSPVQEGTEEGSSPRASVSDN. Over residues 311-322 the composition is skewed to polar residues; sequence EGSSPRASVSDN. The TIR domain maps to 356–493; the sequence is PQYQVFINFR…KWKEALSSVF (138 aa). E430 is an active-site residue.

This sequence belongs to the VAMP-associated protein (VAP) (TC 9.B.17) family.

The enzyme catalyses NAD(+) + H2O = ADP-D-ribose + nicotinamide + H(+). Functionally, may play a role in vesicle trafficking. This is Vesicle-associated protein 1-4 (PVA14) from Arabidopsis thaliana (Mouse-ear cress).